Reading from the N-terminus, the 347-residue chain is SCA7 domain-containing protein SELMODRAFT_439258 (347 aa).

The signal sequence occupies residues 1 to 13 (MCFFLSSLCPVVA). The segment at 77–106 (RAEVGGTGPKVGRPRKLSVYNPREMSDGNP) is disordered. Residues 134–201 (QHLPFTVDDL…NNSRKSQQAD (68 aa)) form the SCA7 domain.

This chain is SCA7 domain-containing protein SELMODRAFT_439258, found in Selaginella moellendorffii (Spikemoss).